A 218-amino-acid polypeptide reads, in one-letter code: Thiopurine S-methyltransferase (218 aa).

Tryptophan 10, leucine 45, glutamate 66, and arginine 123 together coordinate S-adenosyl-L-methionine.

The protein belongs to the class I-like SAM-binding methyltransferase superfamily. TPMT family.

Its subcellular location is the cytoplasm. It carries out the reaction S-adenosyl-L-methionine + a thiopurine = S-adenosyl-L-homocysteine + a thiopurine S-methylether.. In Shewanella baltica (strain OS223), this protein is Thiopurine S-methyltransferase.